The chain runs to 211 residues: Claudin-7 (211 aa).

The Cytoplasmic portion of the chain corresponds to 1–7 (MANSGLQ). Residues 8-28 (LLGFSMALLGWVGLVACTAIP) traverse the membrane as a helical segment. The Extracellular portion of the chain corresponds to 29-81 (QWQMSSYAGDNIITAQAMYKGLWMDCVTQSTGMMSCKMYDSVLALSAALQATR). The chain crosses the membrane as a helical span at residues 82–102 (ALMVVSLVLGFLAMFVATMGM). Residues 103 to 117 (KCTRCGGDDKVKKAR) are Cytoplasmic-facing. Residues 118–138 (IAMGGGIIFIVAGLAALVACS) form a helical membrane-spanning segment. The Extracellular segment spans residues 139–160 (WYGHQIVTDFYNPLIPTNIKYE). The helical transmembrane segment at 161 to 181 (FGPAIFIGWAGSALVILGGAL) threads the bilayer. At 182–211 (LSCSCPGNESKAGYRVPRSYPKSNSSKEYV) the chain is on the cytoplasmic side. The segment at 210-211 (YV) is interactions with TJP1, TJP2 and TJP3.

This sequence belongs to the claudin family. Directly interacts with TJP1/ZO-1, TJP2/ZO-2 and TJP3/ZO-3. The phosphorylated form interacts with EPCAM. Does not interact with CD81. Post-translationally, phosphorylated. Expressed in kidney, lung and prostate. Isoform 1 seems to be predominant, except in some normal prostate samples, where isoform 2 is the major form. Down-regulated in breast cancers, including ductal carcinoma in situ (DCIS), lobular carcinoma in situ (LCIS) and invasive ductal carcinoma (IDC) (at protein level), as well as in several cancer cell lines. Loss of expression correlates with histological grade, occurring predominantly in high-grade lesions.

It localises to the cell membrane. It is found in the basolateral cell membrane. The protein localises to the cell junction. The protein resides in the tight junction. Functionally, plays a major role in tight junction-specific obliteration of the intercellular space. In Homo sapiens (Human), this protein is Claudin-7 (CLDN7).